We begin with the raw amino-acid sequence, 154 residues long: DNA gyrase inhibitor (154 aa).

The protein belongs to the DNA gyrase inhibitor family. As to quaternary structure, interacts with DNA gyrase.

The protein localises to the cytoplasm. Functionally, inhibits the supercoiling activity of DNA gyrase. Acts by inhibiting DNA gyrase at an early step, prior to (or at the step of) binding of DNA by the gyrase. It protects cells against toxins that target DNA gyrase, by inhibiting activity of these toxins and reducing the formation of lethal double-strand breaks in the cell. This is DNA gyrase inhibitor from Pectobacterium carotovorum subsp. carotovorum (strain PC1).